The primary structure comprises 368 residues: UDP-N-acetylglucosamine--N-acetylmuramyl-(pentapeptide) pyrophosphoryl-undecaprenol N-acetylglucosamine transferase (368 aa).

UDP-N-acetyl-alpha-D-glucosamine-binding positions include Thr-13–Gly-15, Asn-127, Arg-168, Ser-200, Ile-254, and Gln-299.

The protein belongs to the glycosyltransferase 28 family. MurG subfamily.

It is found in the cell inner membrane. It catalyses the reaction di-trans,octa-cis-undecaprenyl diphospho-N-acetyl-alpha-D-muramoyl-L-alanyl-D-glutamyl-meso-2,6-diaminopimeloyl-D-alanyl-D-alanine + UDP-N-acetyl-alpha-D-glucosamine = di-trans,octa-cis-undecaprenyl diphospho-[N-acetyl-alpha-D-glucosaminyl-(1-&gt;4)]-N-acetyl-alpha-D-muramoyl-L-alanyl-D-glutamyl-meso-2,6-diaminopimeloyl-D-alanyl-D-alanine + UDP + H(+). The protein operates within cell wall biogenesis; peptidoglycan biosynthesis. Its function is as follows. Cell wall formation. Catalyzes the transfer of a GlcNAc subunit on undecaprenyl-pyrophosphoryl-MurNAc-pentapeptide (lipid intermediate I) to form undecaprenyl-pyrophosphoryl-MurNAc-(pentapeptide)GlcNAc (lipid intermediate II). This is UDP-N-acetylglucosamine--N-acetylmuramyl-(pentapeptide) pyrophosphoryl-undecaprenol N-acetylglucosamine transferase from Parabacteroides distasonis (strain ATCC 8503 / DSM 20701 / CIP 104284 / JCM 5825 / NCTC 11152).